The following is a 315-amino-acid chain: DNA-directed RNA polymerase subunit alpha (315 aa).

Residues 1–228 are alpha N-terminal domain (alpha-NTD); sequence MAQFQIECVE…DLFNPLKDIS (228 aa). The tract at residues 243-315 is alpha C-terminal domain (alpha-CTD); sequence TAQIPIEELQ…LPQERSSKHN (73 aa).

The protein belongs to the RNA polymerase alpha chain family. As to quaternary structure, homodimer. In cyanobacteria the RNAP catalytic core is composed of 2 alpha, 1 beta, 1 beta', 1 gamma and 1 omega subunit. When a sigma factor is associated with the core the holoenzyme is formed, which can initiate transcription.

The enzyme catalyses RNA(n) + a ribonucleoside 5'-triphosphate = RNA(n+1) + diphosphate. DNA-dependent RNA polymerase catalyzes the transcription of DNA into RNA using the four ribonucleoside triphosphates as substrates. The sequence is that of DNA-directed RNA polymerase subunit alpha from Nostoc sp. (strain PCC 7120 / SAG 25.82 / UTEX 2576).